The chain runs to 141 residues: Large ribosomal subunit protein uL11 (141 aa).

It belongs to the universal ribosomal protein uL11 family. In terms of assembly, part of the ribosomal stalk of the 50S ribosomal subunit. Interacts with L10 and the large rRNA to form the base of the stalk. L10 forms an elongated spine to which L12 dimers bind in a sequential fashion forming a multimeric L10(L12)X complex. One or more lysine residues are methylated.

Forms part of the ribosomal stalk which helps the ribosome interact with GTP-bound translation factors. The sequence is that of Large ribosomal subunit protein uL11 from Oceanobacillus iheyensis (strain DSM 14371 / CIP 107618 / JCM 11309 / KCTC 3954 / HTE831).